Here is a 208-residue protein sequence, read N- to C-terminus: ATP-dependent Clp protease proteolytic subunit (208 aa).

The active-site Nucleophile is the Ser98. His123 is an active-site residue.

This sequence belongs to the peptidase S14 family. In terms of assembly, fourteen ClpP subunits assemble into 2 heptameric rings which stack back to back to give a disk-like structure with a central cavity, resembling the structure of eukaryotic proteasomes.

It localises to the cytoplasm. The enzyme catalyses Hydrolysis of proteins to small peptides in the presence of ATP and magnesium. alpha-casein is the usual test substrate. In the absence of ATP, only oligopeptides shorter than five residues are hydrolyzed (such as succinyl-Leu-Tyr-|-NHMec, and Leu-Tyr-Leu-|-Tyr-Trp, in which cleavage of the -Tyr-|-Leu- and -Tyr-|-Trp bonds also occurs).. Cleaves peptides in various proteins in a process that requires ATP hydrolysis. Has a chymotrypsin-like activity. Plays a major role in the degradation of misfolded proteins. This chain is ATP-dependent Clp protease proteolytic subunit, found in Wolbachia sp. subsp. Brugia malayi (strain TRS).